Here is a 500-residue protein sequence, read N- to C-terminus: UPF0371 protein SZO_06760 (500 aa).

This sequence belongs to the UPF0371 family.

The chain is UPF0371 protein SZO_06760 from Streptococcus equi subsp. zooepidemicus (strain H70).